The chain runs to 288 residues: MLIAVSSADRLDLWQAIVLGFVQGATEFLPISSTAHLKVVPVVLGWGDPGVAFTAVIQLGSIVAVLSYFRQDLTYVLRGLVSAVRRQDFRSEPAQMGLGILFGTIPILIGGLLIKRFIPDYDNSPLRSLAAIAIVSIVMGLLLGIAEQLSKHQRDLSQLRLADGLWMGFAQALALIPGVSRSGSTLTAGLFQGLKRDTAARFSFLLGIPAITIAGLVELKDLLEAGIDGSSLGVLAIGTLSSLIFSWLAIAWLLRFLRTHNTWSFVVYRIIFGGVILTAIATGTLQNI.

Helical transmembrane passes span 11–31, 49–69, 94–114, 129–149, 159–179, 199–219, 234–254, and 265–285; these read LDLW…FLPI, PGVA…LSYF, AQMG…GLLI, LAAI…AEQL, LRLA…IPGV, AARF…LVEL, VLAI…AWLL, and FVVY…TGTL.

This sequence belongs to the UppP family.

It is found in the cell inner membrane. The catalysed reaction is di-trans,octa-cis-undecaprenyl diphosphate + H2O = di-trans,octa-cis-undecaprenyl phosphate + phosphate + H(+). Catalyzes the dephosphorylation of undecaprenyl diphosphate (UPP). Confers resistance to bacitracin. This is Undecaprenyl-diphosphatase from Synechococcus elongatus (strain ATCC 33912 / PCC 7942 / FACHB-805) (Anacystis nidulans R2).